The primary structure comprises 714 residues: BBSome complex member bbs-2 (714 aa).

Coiled-coil stretches lie at residues 332-361 (IREFGQKKHNLMMELSNYEQEEQLADVEKD) and 597-627 (MTEVRDRLTAELQERQAAVKEIIIRAEDSIA).

Part of BBSome complex, that contains at least bbs-1, bbs-2, bbs-4, bbs-5, osm-12, bbs-8/ttc-8 and bbs-9. In terms of tissue distribution, expressed in ciliated cells including amphid and both inner and outer labial neurons of the head and in both phasmid neurons PHA and PHB in the tail at larval stages L1 and L2.

The protein resides in the cell projection. The protein localises to the cilium. It localises to the cytoplasm. It is found in the cytoskeleton. Its subcellular location is the cilium basal body. The protein resides in the cilium axoneme. Component of the BBSome complex. The BBSome complex is thought to function as a coat complex required for sorting of specific membrane proteins to the primary cilia. The BBSome complex is required for ciliogenesis but is dispensable for centriolar satellite function. Required for proper BBSome complex assembly and its ciliary localization. Required for cilia biogenesis and both the assembly and movement of intraflagellar transport proteins along the ciliary axoneme. This chain is BBSome complex member bbs-2, found in Caenorhabditis elegans.